Consider the following 151-residue polypeptide: Transcriptional repressor NrdR (151 aa).

Residues 1 to 24 (MRCPKCQHNGTRVLDSRPSDESRS) are disordered. A zinc finger spans residues 3-34 (CPKCQHNGTRVLDSRPSDESRSIKRRRECEKC). Basic and acidic residues predominate over residues 14–24 (LDSRPSDESRS). An ATP-cone domain is found at 49-139 (LLIIKKDGMR…VYRQFKDINV (91 aa)).

This sequence belongs to the NrdR family. Zn(2+) is required as a cofactor.

Negatively regulates transcription of bacterial ribonucleotide reductase nrd genes and operons by binding to NrdR-boxes. This chain is Transcriptional repressor NrdR, found in Shouchella clausii (strain KSM-K16) (Alkalihalobacillus clausii).